A 235-amino-acid chain; its full sequence is 7-cyano-7-deazaguanine synthase (235 aa).

16–26 is a binding site for ATP; the sequence is FSGGQDSTTCL. Zn(2+)-binding residues include cysteine 195, cysteine 204, cysteine 207, and cysteine 210.

The protein belongs to the QueC family. Zn(2+) serves as cofactor.

The enzyme catalyses 7-carboxy-7-deazaguanine + NH4(+) + ATP = 7-cyano-7-deazaguanine + ADP + phosphate + H2O + H(+). The protein operates within purine metabolism; 7-cyano-7-deazaguanine biosynthesis. Catalyzes the ATP-dependent conversion of 7-carboxy-7-deazaguanine (CDG) to 7-cyano-7-deazaguanine (preQ(0)). This is 7-cyano-7-deazaguanine synthase from Shewanella frigidimarina (strain NCIMB 400).